A 707-amino-acid chain; its full sequence is Ribosomal RNA large subunit methyltransferase K/L (707 aa).

The THUMP domain occupies 43-154 (QIYRCCLWSR…KDKAILGVDM (112 aa)).

Belongs to the methyltransferase superfamily. RlmKL family.

It localises to the cytoplasm. The enzyme catalyses guanosine(2445) in 23S rRNA + S-adenosyl-L-methionine = N(2)-methylguanosine(2445) in 23S rRNA + S-adenosyl-L-homocysteine + H(+). The catalysed reaction is guanosine(2069) in 23S rRNA + S-adenosyl-L-methionine = N(2)-methylguanosine(2069) in 23S rRNA + S-adenosyl-L-homocysteine + H(+). Its function is as follows. Specifically methylates the guanine in position 2445 (m2G2445) and the guanine in position 2069 (m7G2069) of 23S rRNA. The polypeptide is Ribosomal RNA large subunit methyltransferase K/L (Vibrio campbellii (strain ATCC BAA-1116)).